The sequence spans 143 residues: Nucleoside diphosphate kinase (143 aa).

Positions 11, 59, 87, 93, 104, and 114 each coordinate ATP. The active-site Pros-phosphohistidine intermediate is the His117.

Belongs to the NDK family. Homotetramer. It depends on Mg(2+) as a cofactor.

It localises to the cytoplasm. It catalyses the reaction a 2'-deoxyribonucleoside 5'-diphosphate + ATP = a 2'-deoxyribonucleoside 5'-triphosphate + ADP. The enzyme catalyses a ribonucleoside 5'-diphosphate + ATP = a ribonucleoside 5'-triphosphate + ADP. In terms of biological role, major role in the synthesis of nucleoside triphosphates other than ATP. The ATP gamma phosphate is transferred to the NDP beta phosphate via a ping-pong mechanism, using a phosphorylated active-site intermediate. The chain is Nucleoside diphosphate kinase from Erwinia tasmaniensis (strain DSM 17950 / CFBP 7177 / CIP 109463 / NCPPB 4357 / Et1/99).